We begin with the raw amino-acid sequence, 606 residues long: Radial spoke head protein 3 homolog (606 aa).

The tract at residues methionine 1 to glycine 103 is disordered. Over residues proline 15–arginine 46 the composition is skewed to basic and acidic residues. At threonine 331 the chain carries Phosphothreonine; by MAPK1. The stretch at alanine 393 to valine 429 forms a coiled coil. The tract at residues glutamate 520–glutamine 606 is disordered. The segment covering serine 547–glutamine 556 has biased composition (polar residues). Residues alanine 572–leucine 604 are a coiled coil. The span at arginine 573 to glutamine 606 shows a compositional bias: basic and acidic residues.

Belongs to the flagellar radial spoke RSP3 family. As to quaternary structure, component of the axonemal radial spoke 1 (RS1) and 2 (RS2) complexes, at least composed of spoke head proteins RSPH1, RSPH3, RSPH9 and the cilia-specific component RSPH4A or sperm-specific component RSPH6A, spoke stalk proteins RSPH14, DNAJB13, DYDC1, ROPN1L and NME5, and the RS1 complex-specific anchor protein IQUB. Interacts with IQUB. Interacts with phosphorylated MAPK1. Interacts with MEK1. Interacts with PKA regulatory subunits PRKAR1A and PRKAR1B. Interacts with RSPH1. Interacts with RSPH4A. Interacts with RSPH6A. Interacts with RSPH9. Interacts with LRRC23.

It is found in the cytoplasm. It localises to the cytoskeleton. The protein resides in the cilium axoneme. The protein localises to the flagellum axoneme. In terms of biological role, functions as part of axonemal radial spoke complexes that play an important part in the motility of sperm and cilia. Functions as a protein kinase A-anchoring protein that scaffolds the cAMP-dependent protein kinase holoenzyme. May serve as a point of convergence for MAPK and PKA signaling in cilia. The sequence is that of Radial spoke head protein 3 homolog (RSPH3) from Bos taurus (Bovine).